A 443-amino-acid chain; its full sequence is Amino-acid acetyltransferase (443 aa).

The region spanning 296–435 (EQIRRATIND…KEMYNYQRRS (140 aa)) is the N-acetyltransferase domain.

The protein belongs to the acetyltransferase family. ArgA subfamily. In terms of assembly, homohexamer.

The protein resides in the cytoplasm. It carries out the reaction L-glutamate + acetyl-CoA = N-acetyl-L-glutamate + CoA + H(+). The protein operates within amino-acid biosynthesis; L-arginine biosynthesis; N(2)-acetyl-L-ornithine from L-glutamate: step 1/4. The protein is Amino-acid acetyltransferase of Enterobacter sp. (strain 638).